The chain runs to 89 residues: Small ribosomal subunit protein uS15 (89 aa).

The protein belongs to the universal ribosomal protein uS15 family. As to quaternary structure, part of the 30S ribosomal subunit. Forms a bridge to the 50S subunit in the 70S ribosome, contacting the 23S rRNA.

One of the primary rRNA binding proteins, it binds directly to 16S rRNA where it helps nucleate assembly of the platform of the 30S subunit by binding and bridging several RNA helices of the 16S rRNA. Its function is as follows. Forms an intersubunit bridge (bridge B4) with the 23S rRNA of the 50S subunit in the ribosome. The sequence is that of Small ribosomal subunit protein uS15 from Coxiella burnetii (strain CbuK_Q154) (Coxiella burnetii (strain Q154)).